A 165-amino-acid chain; its full sequence is UPF0303 protein BMA1246 (165 aa).

The protein belongs to the UPF0303 family.

The chain is UPF0303 protein BMA1246 from Burkholderia mallei (strain ATCC 23344).